The following is a 116-amino-acid chain: NADH-ubiquinone oxidoreductase chain 3 (116 aa).

3 helical membrane passes run 8 to 28 (VAAT…LPSL), 56 to 76 (FFLV…LLPL), and 87 to 107 (ISLL…IYEW).

The protein belongs to the complex I subunit 3 family.

The protein localises to the mitochondrion membrane. It catalyses the reaction a ubiquinone + NADH + 5 H(+)(in) = a ubiquinol + NAD(+) + 4 H(+)(out). In terms of biological role, core subunit of the mitochondrial membrane respiratory chain NADH dehydrogenase (Complex I) that is believed to belong to the minimal assembly required for catalysis. Complex I functions in the transfer of electrons from NADH to the respiratory chain. The immediate electron acceptor for the enzyme is believed to be ubiquinone. This chain is NADH-ubiquinone oxidoreductase chain 3 (MT-ND3), found in Squalus acanthias (Spiny dogfish).